Here is a 206-residue protein sequence, read N- to C-terminus: Transcription antitermination protein NusB (206 aa).

The segment at 135–206 is disordered; that stretch reads ARGEKTSAQE…ETQPPGVNEV (72 aa). Residues 169–180 show a composition bias toward low complexity; that stretch reads ATPATTPVTTTV.

The protein belongs to the NusB family.

In terms of biological role, involved in transcription antitermination. Required for transcription of ribosomal RNA (rRNA) genes. Binds specifically to the boxA antiterminator sequence of the ribosomal RNA (rrn) operons. The chain is Transcription antitermination protein NusB from Heliobacterium modesticaldum (strain ATCC 51547 / Ice1).